A 138-amino-acid chain; its full sequence is MVDYFDYNSLLTRAREQLPEEVFKDVRFEIPSADSFVEGNRTIIKNFKDIAKFMERDAQEFAKYVMKELGTAGDIEGVRLILQGKFGWRMVNEKIQNYVNEYVLCPECGKPDTKIVKEGRIHFLKCTACGAMKPVKTL.

The protein belongs to the eIF-2-beta/eIF-5 family. Heterotrimer composed of an alpha, a beta and a gamma chain.

Its function is as follows. eIF-2 functions in the early steps of protein synthesis by forming a ternary complex with GTP and initiator tRNA. In Methanococcus maripaludis (strain C5 / ATCC BAA-1333), this protein is Translation initiation factor 2 subunit beta.